The sequence spans 65 residues: Large ribosomal subunit protein uL29 (65 aa).

This sequence belongs to the universal ribosomal protein uL29 family.

This Bacteroides thetaiotaomicron (strain ATCC 29148 / DSM 2079 / JCM 5827 / CCUG 10774 / NCTC 10582 / VPI-5482 / E50) protein is Large ribosomal subunit protein uL29.